The sequence spans 1275 residues: Serine/threonine-protein kinase ULK4 (1275 aa).

The Protein kinase domain occupies 4 to 280; it reads FILYEEIGRG…WTRLLQHSFW (277 aa). 2 disordered regions span residues 299–350 and 364–392; these read SRNT…KSTL and RPTP…TSPL. Residues 336–348 are compositionally biased toward basic and acidic residues; that stretch reads FRLENPTEFRPKS. Positions 364-373 are enriched in polar residues; the sequence is RPTPRTSTAV. HEAT repeat units follow at residues 842–880, 926–964, 1025–1063, 1151–1189, and 1213–1253; these read LKLC…ILSH, STVV…LLVN, LVEE…NLVA, NRPL…LYGG, and PKEQ…LAPG.

Belongs to the protein kinase superfamily. Ser/Thr protein kinase family. APG1/unc-51/ULK1 subfamily. Expressed in the brain, mainly in postmitotic neurons, including GABAergic neurons, but not in astrocytes (at protein level).

The enzyme catalyses L-seryl-[protein] + ATP = O-phospho-L-seryl-[protein] + ADP + H(+). The catalysed reaction is L-threonyl-[protein] + ATP = O-phospho-L-threonyl-[protein] + ADP + H(+). Functionally, may be involved in the remodeling of cytoskeletal components, such as alpha-tubulin, and in this way regulates neurite branching and elongation, as well as cell motility. This is Serine/threonine-protein kinase ULK4 (ULK4) from Homo sapiens (Human).